We begin with the raw amino-acid sequence, 425 residues long: Enolase (425 aa).

Q162 contributes to the (2R)-2-phosphoglycerate binding site. E204 serves as the catalytic Proton donor. Mg(2+) contacts are provided by D241, E282, and D309. The (2R)-2-phosphoglycerate site is built by K334, R363, S364, and K385. Residue K334 is the Proton acceptor of the active site.

This sequence belongs to the enolase family. Mg(2+) serves as cofactor.

It is found in the cytoplasm. The protein resides in the secreted. It localises to the cell surface. It carries out the reaction (2R)-2-phosphoglycerate = phosphoenolpyruvate + H2O. It functions in the pathway carbohydrate degradation; glycolysis; pyruvate from D-glyceraldehyde 3-phosphate: step 4/5. Its function is as follows. Catalyzes the reversible conversion of 2-phosphoglycerate (2-PG) into phosphoenolpyruvate (PEP). It is essential for the degradation of carbohydrates via glycolysis. In Corynebacterium jeikeium (strain K411), this protein is Enolase.